The following is a 266-amino-acid chain: 3-methyl-2-oxobutanoate hydroxymethyltransferase (266 aa).

Mg(2+) is bound by residues Asp47 and Asp86. 3-methyl-2-oxobutanoate contacts are provided by residues 47 to 48, Asp86, and Lys114; that span reads DS. Glu116 contributes to the Mg(2+) binding site. The active-site Proton acceptor is the Glu183.

The protein belongs to the PanB family. In terms of assembly, homodecamer; pentamer of dimers. Mg(2+) serves as cofactor.

The protein resides in the cytoplasm. It carries out the reaction 3-methyl-2-oxobutanoate + (6R)-5,10-methylene-5,6,7,8-tetrahydrofolate + H2O = 2-dehydropantoate + (6S)-5,6,7,8-tetrahydrofolate. It participates in cofactor biosynthesis; (R)-pantothenate biosynthesis; (R)-pantoate from 3-methyl-2-oxobutanoate: step 1/2. In terms of biological role, catalyzes the reversible reaction in which hydroxymethyl group from 5,10-methylenetetrahydrofolate is transferred onto alpha-ketoisovalerate to form ketopantoate. This chain is 3-methyl-2-oxobutanoate hydroxymethyltransferase, found in Idiomarina loihiensis (strain ATCC BAA-735 / DSM 15497 / L2-TR).